The primary structure comprises 391 residues: Tyrosine recombinase XerC-like (391 aa).

One can recognise a Core-binding (CB) domain in the interval 64-148 (VTLGDLMHTW…FLKTFFNYAV (85 aa)). The 210-residue stretch at 175–384 (TEIETFSDEE…IPKQKTNAVE (210 aa)) folds into the Tyr recombinase domain. Catalysis depends on residues arginine 210, lysine 244, histidine 335, arginine 338, and histidine 361. The active-site O-(3'-phospho-DNA)-tyrosine intermediate is the tyrosine 371.

The protein belongs to the 'phage' integrase family.

Its subcellular location is the cytoplasm. Its function is as follows. Site-specific tyrosine recombinase, which acts by catalyzing the cutting and rejoining of the recombining DNA molecules. The polypeptide is Tyrosine recombinase XerC-like (Caldanaerobacter subterraneus subsp. tengcongensis (strain DSM 15242 / JCM 11007 / NBRC 100824 / MB4) (Thermoanaerobacter tengcongensis)).